The primary structure comprises 104 residues: MSSTLDTQHDVVVEKQPARTAPPPMYQVVLLNDDYTPMEFVVKVLQKFFGKNSEDATRIMLQVHHEGRAVCGVYPRDLAATRIAQVSQYARARQHPLQCIMEPA.

The protein belongs to the ClpS family. As to quaternary structure, binds to the N-terminal domain of the chaperone ClpA.

Involved in the modulation of the specificity of the ClpAP-mediated ATP-dependent protein degradation. The polypeptide is ATP-dependent Clp protease adapter protein ClpS (Bordetella bronchiseptica (strain ATCC BAA-588 / NCTC 13252 / RB50) (Alcaligenes bronchisepticus)).